Consider the following 259-residue polypeptide: Ribonuclease T2-B (259 aa).

The N-terminal stretch at 1–29 (MAPAEARGALPGWISVLGWGLALCSLCGA) is a signal peptide. A disulfide bridge links Cys-53 with Cys-59. Residue His-69 is part of the active site. 3 cysteine pairs are disulfide-bonded: Cys-79/Cys-125, Cys-188/Cys-244, and Cys-206/Cys-217. N-linked (GlcNAc...) asparagine glycosylation is found at Asn-80 and Asn-110. Residues Glu-118 and His-122 contribute to the active site. An N-linked (GlcNAc...) asparagine glycan is attached at Asn-216.

This sequence belongs to the RNase T2 family.

It is found in the secreted. The protein resides in the lysosome lumen. Its subcellular location is the endoplasmic reticulum lumen. It localises to the mitochondrion intermembrane space. The catalysed reaction is a ribonucleotidyl-ribonucleotide-RNA + H2O = a 3'-end 3'-phospho-ribonucleotide-RNA + a 5'-end dephospho-ribonucleoside-RNA + H(+). It carries out the reaction an adenylyl-uridine-RNA = a 3'-end 2',3'-cyclophospho-AMP-RNA + a 5'-end dephospho-uridine-RNA. The enzyme catalyses a guanylyl-uridine-RNA = a 3'-end 2',3'-cyclophospho-GMP-RNA + a 5'-end dephospho-uridine-RNA. Inhibited by Zn(2+) and Cu(2+). Functionally, ribonuclease that plays an essential role in innate immune response by recognizing and degrading RNAs from microbial pathogens that are subsequently sensed by TLR8. Cleaves preferentially single-stranded RNA molecules between purine and uridine residues, which critically contributes to the supply of catabolic uridine and the generation of purine-2',3'-cyclophosphate-terminated oligoribonucleotides. In turn, RNase T2 degradation products promote the RNA-dependent activation of TLR8. In plasmacytoid dendritic cells, it cooperates with PLD3 or PLD4 5'-&gt;3' exonucleases to process RNA fragments and release 2',3'-cyclic guanosine monophosphate (2',3'-cGMP), a potent stimulatory ligand for TLR7. Also plays a key role in degradation of mitochondrial RNA and processing of non-coding RNA imported from the cytosol into mitochondria. Participates as well in degradation of mitochondrion-associated cytosolic rRNAs. In Mus musculus (Mouse), this protein is Ribonuclease T2-B.